The following is a 735-amino-acid chain: Protein PAT1 homolog 2 (735 aa).

Disordered regions lie at residues 39 to 93 (TFGL…REVK) and 336 to 366 (QLHP…PDPY). Basic and acidic residues-rich tracts occupy residues 49-59 (EPTKQEEDHKK) and 67-93 (PKIE…REVK). The segment covering 346–356 (SQRQRPQSSSR) has biased composition (low complexity).

The protein belongs to the PAT1 family. In terms of assembly, interacts with ribonucleoprotein complex components. Interacts with cpeb.

The protein localises to the cytoplasm. It localises to the nucleus. RNA-binding protein that acts as a translational repressor. The sequence is that of Protein PAT1 homolog 2 (patl2) from Xenopus tropicalis (Western clawed frog).